The following is a 180-amino-acid chain: ADP-ribosylation factor 5 (180 aa).

A lipid anchor (N-myristoyl glycine) is attached at Gly-2. Residues 24 to 31 (GLDAAGKT), 67 to 71 (DVGGQ), and 126 to 129 (NKQD) each bind GTP.

It belongs to the small GTPase superfamily. Arf family.

Its subcellular location is the golgi apparatus. Its function is as follows. GTP-binding protein involved in protein trafficking; may modulate vesicle budding and uncoating within the Golgi apparatus. This Gallus gallus (Chicken) protein is ADP-ribosylation factor 5 (ARF5).